A 597-amino-acid polypeptide reads, in one-letter code: K(+) efflux antiporter 6 (597 aa).

Residues 1–35 (MVEGRRRRRFSLSSQQLALLLLLLSFFLCFSVASP) form the signal peptide. Helical transmembrane passes span 177–197 (LISD…AFAC), 201–221 (PVIT…LNFI), 224–244 (MVQV…ALGL), 257–277 (VAVL…GITV), 287–307 (GVFV…KFLM), 321–341 (IGIL…LPVL), 351–371 (MLSI…LSIL), 396–416 (LAAV…GLSL), 440–460 (IEPI…MLVN), 461–481 (VHFL…VIII), 499–519 (TALL…VLLS), and 543–563 (LVTT…GILL).

The protein belongs to the monovalent cation:proton antiporter 2 (CPA2) transporter (TC 2.A.37) family. KEA (TC 2.A.37.1) subfamily. In terms of tissue distribution, expressed in roots, stems, leaves, flowers and silique.

The protein resides in the golgi apparatus membrane. It localises to the golgi apparatus. Its subcellular location is the trans-Golgi network membrane. It is found in the prevacuolar compartment membrane. The protein localises to the endomembrane system. The catalysed reaction is K(+)(in) + H(+)(out) = K(+)(out) + H(+)(in). Its function is as follows. Electroneutral K(+)/H(+) efflux antiporter involved in K(+) homeostasis and osmotic adjustment. Together with KEA4 and KEA5, promotes growth and development, and facilitates endosomal pH and ions homeostasis, as well as salt tolerance (e.g. K(+), NaCl and LiCl), probably by supporting cell wall biosynthesis during rapid etiolated seedling growth. This chain is K(+) efflux antiporter 6, found in Arabidopsis thaliana (Mouse-ear cress).